The primary structure comprises 230 residues: Flagellar L-ring protein (230 aa).

Positions 1–15 are cleaved as a signal peptide; it reads MSRLPSLSRPCLAIA. The N-palmitoyl cysteine moiety is linked to residue cysteine 16. Cysteine 16 carries the S-diacylglycerol cysteine lipid modification.

It belongs to the FlgH family. As to quaternary structure, the basal body constitutes a major portion of the flagellar organelle and consists of four rings (L,P,S, and M) mounted on a central rod.

Its subcellular location is the cell outer membrane. It is found in the bacterial flagellum basal body. Its function is as follows. Assembles around the rod to form the L-ring and probably protects the motor/basal body from shearing forces during rotation. This Xanthomonas axonopodis pv. citri (strain 306) protein is Flagellar L-ring protein.